The chain runs to 286 residues: Shikimate dehydrogenase (NADP(+)) (286 aa).

Residues Ser19–Ser21 and Thr66 each bind shikimate. Lys70 acts as the Proton acceptor in catalysis. The shikimate site is built by Asn91 and Asp107. NADP(+)-binding positions include Gly129–Ala133 and Leu229. Shikimate is bound at residue Tyr231. Gly252 contacts NADP(+).

It belongs to the shikimate dehydrogenase family. Homodimer.

It carries out the reaction shikimate + NADP(+) = 3-dehydroshikimate + NADPH + H(+). It functions in the pathway metabolic intermediate biosynthesis; chorismate biosynthesis; chorismate from D-erythrose 4-phosphate and phosphoenolpyruvate: step 4/7. Functionally, involved in the biosynthesis of the chorismate, which leads to the biosynthesis of aromatic amino acids. Catalyzes the reversible NADPH linked reduction of 3-dehydroshikimate (DHSA) to yield shikimate (SA). The sequence is that of Shikimate dehydrogenase (NADP(+)) from Prochlorococcus marinus (strain AS9601).